Here is a 262-residue protein sequence, read N- to C-terminus: Hydroxyacylglutathione hydrolase (262 aa).

His-53, His-55, Asp-57, His-58, His-111, Asp-128, and His-166 together coordinate Zn(2+).

The protein belongs to the metallo-beta-lactamase superfamily. Glyoxalase II family. In terms of assembly, monomer. Zn(2+) is required as a cofactor.

The catalysed reaction is an S-(2-hydroxyacyl)glutathione + H2O = a 2-hydroxy carboxylate + glutathione + H(+). It participates in secondary metabolite metabolism; methylglyoxal degradation; (R)-lactate from methylglyoxal: step 2/2. Thiolesterase that catalyzes the hydrolysis of S-D-lactoyl-glutathione to form glutathione and D-lactic acid. The polypeptide is Hydroxyacylglutathione hydrolase (Nitrosomonas europaea (strain ATCC 19718 / CIP 103999 / KCTC 2705 / NBRC 14298)).